We begin with the raw amino-acid sequence, 428 residues long: 2-isopropylmalate synthase 2 (428 aa).

Residues 40 to 302 (PFFMDVTLRD…EVPLNFSTIY (263 aa)) form the Pyruvate carboxyltransferase domain. Mn(2+)-binding residues include aspartate 49, histidine 241, histidine 243, and asparagine 277.

Belongs to the alpha-IPM synthase/homocitrate synthase family. LeuA type 1 subfamily. As to quaternary structure, homodimer. The cofactor is Mn(2+).

The protein localises to the cytoplasm. It catalyses the reaction 3-methyl-2-oxobutanoate + acetyl-CoA + H2O = (2S)-2-isopropylmalate + CoA + H(+). It functions in the pathway amino-acid biosynthesis; L-leucine biosynthesis; L-leucine from 3-methyl-2-oxobutanoate: step 1/4. In terms of biological role, catalyzes the condensation of the acetyl group of acetyl-CoA with 3-methyl-2-oxobutanoate (2-ketoisovalerate) to form 3-carboxy-3-hydroxy-4-methylpentanoate (2-isopropylmalate). Has high alpha-isopropylmalate synthase activity and low citramalate synthase activity. In Leptospira interrogans serogroup Icterohaemorrhagiae serovar Lai (strain 56601), this protein is 2-isopropylmalate synthase 2.